The sequence spans 220 residues: Superoxide dismutase [Fe] (220 aa).

Fe cation contacts are provided by His26, His73, Asp164, and His168.

It belongs to the iron/manganese superoxide dismutase family. Homodimer. Requires Fe cation as cofactor.

The enzyme catalyses 2 superoxide + 2 H(+) = H2O2 + O2. Functionally, destroys superoxide anion radicals which are normally produced within the cells and which are toxic to biological systems. The sequence is that of Superoxide dismutase [Fe] (sodB) from Campylobacter coli.